We begin with the raw amino-acid sequence, 261 residues long: Phosphonates import ATP-binding protein PhnC (261 aa).

The region spanning 8-253 (LRVENLSKTY…WFRRIYGEGA (246 aa)) is the ABC transporter domain. 41 to 48 (GLSGSGKS) contacts ATP.

The protein belongs to the ABC transporter superfamily. Phosphonates importer (TC 3.A.1.9.1) family. As to quaternary structure, the complex is composed of two ATP-binding proteins (PhnC), two transmembrane proteins (PhnE) and a solute-binding protein (PhnD).

The protein resides in the cell inner membrane. The enzyme catalyses phosphonate(out) + ATP + H2O = phosphonate(in) + ADP + phosphate + H(+). In terms of biological role, part of the ABC transporter complex PhnCDE involved in phosphonates import. Responsible for energy coupling to the transport system. This Bdellovibrio bacteriovorus (strain ATCC 15356 / DSM 50701 / NCIMB 9529 / HD100) protein is Phosphonates import ATP-binding protein PhnC.